The sequence spans 379 residues: Inositol 3-kinase (379 aa).

ATP-binding positions include S217, 267–270 (GAGD), and N294. D270 functions as the Proton acceptor in the catalytic mechanism.

This sequence belongs to the carbohydrate kinase pfkB family.

It catalyses the reaction myo-inositol + ATP = 1D-myo-inositol 3-phosphate + ADP + H(+). Its function is as follows. Kinase that phosphorylates myo-inositol to produce multiple myo-inositol monophosphates, Ins(1)P, Ins(3)P, Ins(4)P, Ins(5)P and Ins(6)P. Participates in phytic acid biosynthesis in developing seeds. Phytic acid is the primary storage form of phosphorus in cereal grains and other plant seeds. This Zea mays (Maize) protein is Inositol 3-kinase.